The following is a 548-amino-acid chain: tRNA (guanine(26)-N(2))-dimethyltransferase (548 aa).

Positions 30–470 constitute a Trm1 methyltransferase domain; it reads ASLTEGSAII…APWSFVWDVL (441 aa). Arg-57, Arg-137, Asp-155, and Ala-186 together coordinate S-adenosyl-L-methionine. Zn(2+) contacts are provided by Cys-317, Cys-320, Cys-354, and Cys-357. Positions 523 to 548 are disordered; the sequence is QMNPTENWGPKSKPGKRTIAEVDSKS.

The protein belongs to the class I-like SAM-binding methyltransferase superfamily. Trm1 family.

The protein localises to the mitochondrion. The protein resides in the nucleus. It is found in the cytoplasm. The enzyme catalyses guanosine(26) in tRNA + 2 S-adenosyl-L-methionine = N(2)-dimethylguanosine(26) in tRNA + 2 S-adenosyl-L-homocysteine + 2 H(+). Its function is as follows. Dimethylates a single guanine residue at position 26 of nuclear- and mitochondrial-encoded tRNAs using S-adenosyl-L-methionine as donor of the methyl groups. Also has tRNA strand annealing and dissociation activity independently of its tRNA guanine-dimethyltransferase activity. In Schizosaccharomyces pombe (strain 972 / ATCC 24843) (Fission yeast), this protein is tRNA (guanine(26)-N(2))-dimethyltransferase.